Consider the following 477-residue polypeptide: Glycogen synthase (477 aa).

Lysine 15 lines the ADP-alpha-D-glucose pocket.

This sequence belongs to the glycosyltransferase 1 family. Bacterial/plant glycogen synthase subfamily.

It carries out the reaction [(1-&gt;4)-alpha-D-glucosyl](n) + ADP-alpha-D-glucose = [(1-&gt;4)-alpha-D-glucosyl](n+1) + ADP + H(+). Its pathway is glycan biosynthesis; glycogen biosynthesis. Functionally, synthesizes alpha-1,4-glucan chains using ADP-glucose. This Clostridium acetobutylicum (strain ATCC 824 / DSM 792 / JCM 1419 / IAM 19013 / LMG 5710 / NBRC 13948 / NRRL B-527 / VKM B-1787 / 2291 / W) protein is Glycogen synthase.